A 75-amino-acid polypeptide reads, in one-letter code: UPF0352 protein CKO_00587 (75 aa).

This sequence belongs to the UPF0352 family.

In Citrobacter koseri (strain ATCC BAA-895 / CDC 4225-83 / SGSC4696), this protein is UPF0352 protein CKO_00587.